A 1358-amino-acid polypeptide reads, in one-letter code: Nonribosomal peptide synthetase rstn8 (1358 aa).

Residues Met-1–Asp-23 form a disordered region. Residues Tyr-261 to Gln-659 form an adenylation region. A Carrier domain is found at Glu-795 to Val-872. Ser-832 carries the O-(pantetheine 4'-phosphoryl)serine modification. The condensation stretch occupies residues Glu-909–Leu-1322.

It belongs to the NRP synthetase family. It depends on pantetheine 4'-phosphate as a cofactor.

The catalysed reaction is restrictinol + glycine + H(+) = restricticin + H2O. It participates in antifungal biosynthesis. In terms of biological role, nonribosomal peptide synthetase; part of the gene cluster that mediates the biosynthesis of the tetrahydropyranyl antifungal agent restricticin that acts as an inhibitor of CYP51 and blocks the ergosterol biosynthesis. Within the pathway, rstn8 catalyzes the C3 esterification of restrictinol with glycine to yield restricticin. Rstn8 represents an example of the emerging class of single-module NRPS-like enzymes that perform esterification reactions. Rstn8 displays strict substrate specificity toward glycine as no other natural amino acid is accepted. Rstn8 does not recognize desmethylrestrictinol as a substrate, demonstrating that rstn1-catalyzed methylation, possibly protecting the C4-OH, must precede the final esterification step. The highly reducing polyketide synthase rstn3, the short chain dehydrogenase rstn4, the cyclase rstn5, the FAD-dependent monooxygenase rstn6 and the enoylreductase rstn7 are required to generate the first stable intermediate desmethylrestrictinol. Rstn3 with rstn7 biosynthesize the first polyketide chain intermediate that is reduced by rstn4, followed by epoxidation by rstn6 before 6-endo cyclization via epoxide opening by rstn5 leads to desmethylrestrictinol. The methyltransferase rstn1 then catalyzes the C4 O-methylation of desmethylrestrictinol to produce restrictinol, and the nonribosomal peptide synthetase rstn8 catalyzes the C3 esterification of restrictinol with glycine that leads to restricticin. This is Nonribosomal peptide synthetase rstn8 from Aspergillus nomiae NRRL (strain ATCC 15546 / NRRL 13137 / CBS 260.88 / M93).